Consider the following 297-residue polypeptide: MGERANFLKGEVRKKFEAAAMSAIDAAMLVDAVVHLGIDHCFREEIATALRSVHEDEEGEFGSCDDLHTVAVRFLVLRQHGLWVSADVFDKFRDDKGSFSKSLLCSNPRGLLSLYNAAHMAVTPEEKVLDDAIAFARSHLVEAMIGELRSPMVEQVSRSFDIPLPRFSRRLESMHYIAEYGQEEEGHDAQILELARLEFELVRSLHLRELREICSAEYGATGEEAFAFIANMTENAWRKINQACMEMDPAMLPAFKVAVVDLSRSIEIIYLGGKRDAYTFGSNLKDLVTSLFLKPCA.

It belongs to the terpene synthase family. Monomer.

It localises to the cytoplasm. Functionally, inactive selinene synthase. The chain is Inactive beta selinene synthase from Zea mays (Maize).